The primary structure comprises 449 residues: UPF0761 membrane protein Cpha266_1653 (449 aa).

6 helical membrane-spanning segments follow: residues 77–97, 133–153, 173–193, 214–234, 244–264, and 277–297; these read LLSLVPLLSVTLSILRVFPVF, SVPLLGVVFLFIIALSLISTI, FTLYWTVLTLGPVLIGSSLVA, LLSFLPFLNSVIAFFLLYMLV, AVYGSLLAAVLFELSKKWFVF, and GALSVIPMLFFWIYLEWVVVL.

The protein belongs to the UPF0761 family.

The protein resides in the cell inner membrane. The sequence is that of UPF0761 membrane protein Cpha266_1653 from Chlorobium phaeobacteroides (strain DSM 266 / SMG 266 / 2430).